Here is a 152-residue protein sequence, read N- to C-terminus: MPVKCCFYRSPTAETMTWSENMDTLLANQAGLDAFRIFLKSEFSEENVEFWLACEDFKKTKNADKIASKAKMIYSEFIEADAPKEINIDFGTRDLISKNIAEPTLKCFDEAQKLIYCLMAKDSFPRFLKSEIYKKLVNSQQVPNHKKWLPFL.

An RGS domain is found at 21-137 (NMDTLLANQA…LKSEIYKKLV (117 aa)).

Expressed ubiquitously.

Functionally, inhibits signal transduction by increasing the GTPase activity of G protein alpha subunits thereby driving them into their inactive GDP-bound form. The chain is Regulator of G-protein signaling 21 (RGS21) from Homo sapiens (Human).